Reading from the N-terminus, the 158-residue chain is D-aminoacyl-tRNA deacylase (158 aa).

The short motif at 138–139 is the Gly-cisPro motif, important for rejection of L-amino acids element; it reads GP.

Belongs to the DTD family. As to quaternary structure, homodimer.

Its subcellular location is the cytoplasm. It catalyses the reaction glycyl-tRNA(Ala) + H2O = tRNA(Ala) + glycine + H(+). It carries out the reaction a D-aminoacyl-tRNA + H2O = a tRNA + a D-alpha-amino acid + H(+). Its function is as follows. An aminoacyl-tRNA editing enzyme that deacylates mischarged D-aminoacyl-tRNAs. Hydrolyzes correctly charged, achiral, glycyl-tRNA(Gly). Deacylates mischarged endogenous and E.coli glycyl-tRNA(Ala), protecting cells against glycine mischarging by AlaRS. Acts via tRNA-based rather than protein-based catalysis; rejects L-amino acids rather than detecting D-amino acids in the active site. By recycling D-aminoacyl-tRNA to D-amino acids and free tRNA molecules, this enzyme counteracts the toxicity associated with the formation of D-aminoacyl-tRNA entities in vivo and helps enforce protein L-homochirality. This chain is D-aminoacyl-tRNA deacylase, found in Drosophila melanogaster (Fruit fly).